A 360-amino-acid polypeptide reads, in one-letter code: 3-dehydroquinate synthase (360 aa).

NAD(+) is bound by residues D69 to K74, G103 to D107, T127 to T128, K140, K149, and C167 to T170. Residues E182, H245, and H262 each contribute to the Zn(2+) site.

It belongs to the sugar phosphate cyclases superfamily. Dehydroquinate synthase family. Co(2+) serves as cofactor. The cofactor is Zn(2+). Requires NAD(+) as cofactor.

The protein resides in the cytoplasm. It catalyses the reaction 7-phospho-2-dehydro-3-deoxy-D-arabino-heptonate = 3-dehydroquinate + phosphate. Its pathway is metabolic intermediate biosynthesis; chorismate biosynthesis; chorismate from D-erythrose 4-phosphate and phosphoenolpyruvate: step 2/7. Catalyzes the conversion of 3-deoxy-D-arabino-heptulosonate 7-phosphate (DAHP) to dehydroquinate (DHQ). The chain is 3-dehydroquinate synthase from Aeromonas hydrophila subsp. hydrophila (strain ATCC 7966 / DSM 30187 / BCRC 13018 / CCUG 14551 / JCM 1027 / KCTC 2358 / NCIMB 9240 / NCTC 8049).